The chain runs to 152 residues: MANLERTFIAIKPDGVQRGLVGEIIKRFEQKGFRLVAMKFLRASEEHLKQHYIDLKDRPFFPGLVKYMNSGPVVAMVWEGLNVVKTGRVMLGETNPADSKPGTIRGDFCIQVGRNIIHGSDSVESAEKEIGLWFKPEELIDYKSCAHDWVYE.

Residues 1–66 (MANLERTFIA…DRPFFPGLVK (66 aa)) are interaction with AKAP13. ATP-binding residues include Lys12, Phe60, Arg88, Thr94, Arg105, and Asn115. His118 serves as the catalytic Pros-phosphohistidine intermediate.

Belongs to the NDK family. In terms of assembly, hexamer of two different chains: An and B (A6, A5B, A4B2, A3B3, A2B4, AB5, B6). Interacts with CAPN8. Interacts with AKAP13. Interacts with ITGB1BP1 (via C-terminal domain region). Interacts with BCL2L10. Mg(2+) is required as a cofactor. In terms of processing, the N-terminus is blocked.

It is found in the cytoplasm. The protein localises to the cell projection. It localises to the lamellipodium. The protein resides in the ruffle. Its subcellular location is the nucleus. It carries out the reaction a 2'-deoxyribonucleoside 5'-diphosphate + ATP = a 2'-deoxyribonucleoside 5'-triphosphate + ADP. The enzyme catalyses a ribonucleoside 5'-diphosphate + ATP = a ribonucleoside 5'-triphosphate + ADP. It catalyses the reaction ATP + protein L-histidine = ADP + protein N-phospho-L-histidine.. Functionally, major role in the synthesis of nucleoside triphosphates other than ATP. The ATP gamma phosphate is transferred to the NDP beta phosphate via a ping-pong mechanism, using a phosphorylated active-site intermediate. Negatively regulates Rho activity by interacting with AKAP13/LBC. Acts as a transcriptional activator of the MYC gene; binds DNA non-specifically. Binds to both single-stranded guanine- and cytosine-rich strands within the nuclease hypersensitive element (NHE) III(1) region of the MYC gene promoter. Does not bind to duplex NHE III(1). Has G-quadruplex (G4) DNA-binding activity, which is independent of its nucleotide-binding and kinase activity. Binds both folded and unfolded G4 with similar low nanomolar affinities. Stabilizes folded G4s regardless of whether they are prefolded or not. Exhibits histidine protein kinase activity. The protein is Nucleoside diphosphate kinase B (Nme2) of Rattus norvegicus (Rat).